A 199-amino-acid polypeptide reads, in one-letter code: BREX protein BrxA (199 aa).

This sequence belongs to the BrxA family.

BREX systems (bacteriophage exclusion) provide immunity against bacteriophage. Part of a type 1 BREX system which protects against dsDNA phage. This system allows phage adsorption but prevents phage DNA replication, without degradation of the phage DNA. Methylation of bacterial DNA by PglX guides self/non-self discrimination. In Paramagnetospirillum magneticum (strain ATCC 700264 / AMB-1) (Magnetospirillum magneticum), this protein is BREX protein BrxA.